The chain runs to 373 residues: Queuine tRNA-ribosyltransferase (373 aa).

The Proton acceptor role is filled by D94. Residues 94 to 98 (DSGGF), D148, Q191, and G218 contribute to the substrate site. The tract at residues 249–255 (GVGTPDY) is RNA binding. The Nucleophile role is filled by D268. The tract at residues 273 to 277 (TRIGR) is RNA binding; important for wobble base 34 recognition. 4 residues coordinate Zn(2+): C306, C308, C311, and H337.

The protein belongs to the queuine tRNA-ribosyltransferase family. As to quaternary structure, homodimer. Within each dimer, one monomer is responsible for RNA recognition and catalysis, while the other monomer binds to the replacement base PreQ1. The cofactor is Zn(2+).

The catalysed reaction is 7-aminomethyl-7-carbaguanine + guanosine(34) in tRNA = 7-aminomethyl-7-carbaguanosine(34) in tRNA + guanine. The protein operates within tRNA modification; tRNA-queuosine biosynthesis. Functionally, catalyzes the base-exchange of a guanine (G) residue with the queuine precursor 7-aminomethyl-7-deazaguanine (PreQ1) at position 34 (anticodon wobble position) in tRNAs with GU(N) anticodons (tRNA-Asp, -Asn, -His and -Tyr). Catalysis occurs through a double-displacement mechanism. The nucleophile active site attacks the C1' of nucleotide 34 to detach the guanine base from the RNA, forming a covalent enzyme-RNA intermediate. The proton acceptor active site deprotonates the incoming PreQ1, allowing a nucleophilic attack on the C1' of the ribose to form the product. After dissociation, two additional enzymatic reactions on the tRNA convert PreQ1 to queuine (Q), resulting in the hypermodified nucleoside queuosine (7-(((4,5-cis-dihydroxy-2-cyclopenten-1-yl)amino)methyl)-7-deazaguanosine). The polypeptide is Queuine tRNA-ribosyltransferase (Ruminiclostridium cellulolyticum (strain ATCC 35319 / DSM 5812 / JCM 6584 / H10) (Clostridium cellulolyticum)).